The following is a 442-amino-acid chain: Cysteine proteinase 4 (442 aa).

The signal sequence occupies residues 1–17; sequence MRVLSFLCLLLVSYASA. The propeptide at 18 to 111 is activation peptide; it reads KQQFSELQYR…TEEEKIFSTP (94 aa). 2 disulfide bridges follow: C132-C178 and C169-C212. Residue C135 is part of the active site. N228 and N254 each carry an N-linked (GlcNAc...) asparagine glycan. A disulfide bridge links C270 with C428. H277 is an active-site residue. The segment at 286 to 396 is disordered; it reads SGSSSSSGSS…SGSGSGAVEA (111 aa). The span at 287–376 shows a compositional bias: low complexity; it reads GSSSSSGSSS…SASGQASASG (90 aa). Residues 377–391 are compositionally biased toward gly residues; the sequence is SGSGSGSGSGSGSGS. N406 is a catalytic residue.

It belongs to the peptidase C1 family. Glycosylated; contains GlcNAc-alpha-1-P-Ser residues and fucose.

Its subcellular location is the lysosome. In Dictyostelium discoideum (Social amoeba), this protein is Cysteine proteinase 4 (cprD).